The chain runs to 634 residues: DNA-directed RNA polymerase subunit gamma (634 aa).

Positions 74, 76, 89, and 92 each coordinate Zn(2+). Residues Asp-471, Asp-473, and Asp-475 each contribute to the Mg(2+) site.

The protein belongs to the RNA polymerase beta' chain family. RpoC1 subfamily. In terms of assembly, in cyanobacteria the RNAP catalytic core is composed of 2 alpha, 1 beta, 1 beta', 1 gamma and 1 omega subunit. When a sigma factor is associated with the core the holoenzyme is formed, which can initiate transcription. Requires Mg(2+) as cofactor. Zn(2+) is required as a cofactor.

The enzyme catalyses RNA(n) + a ribonucleoside 5'-triphosphate = RNA(n+1) + diphosphate. DNA-dependent RNA polymerase catalyzes the transcription of DNA into RNA using the four ribonucleoside triphosphates as substrates. This is DNA-directed RNA polymerase subunit gamma from Synechococcus sp. (strain WH7803).